A 348-amino-acid polypeptide reads, in one-letter code: MAETYRFPRFSHEENGTVEPLPLKTGPDKKAIPHIRIVKVGDPPKHGVRYLDVLLLGFFETPKQGPLSGSISDLTESTSYSICGSGSLPIGIAKYYGTDQELLKACIDLKITVRRTVRSGEMIVYMVDSIHAPLLPWSSRLRQGMIYNANKVALAPQCLPVDKDIRFRVVFVNGTSLGTITIAKVPKTLADLALPNSISVNLLVTLKAGVSTEQKGILPVLDDDGEKKLNFMVHLGIIRRKVGKIYSVEYCKNKIEKMKLIFSLGLVGGISFHVHATGTLSKTLMSQLAWKKAVCYPLMDLNPHMNLVIWAASVEITSVDAVFQPAIPKEFRYYPNVVAKSIGKIRKI.

A disulfide bridge connects residues C251 and C295.

Belongs to the morbillivirus/respirovirus/rubulavirus M protein family.

It is found in the virion. Its function is as follows. The M protein has a crucial role in virus assembly and interacts with the RNP complex as well as with the viral membrane. In Homo sapiens (Human), this protein is Matrix protein (M).